We begin with the raw amino-acid sequence, 1212 residues long: DNA-directed RNA polymerase subunit beta (1212 aa).

The segment covering 1176–1195 (QQEKKKLAEEAAKKDDKSAE) has biased composition (basic and acidic residues). The segment at 1176-1212 (QQEKKKLAEEAAKKDDKSAEPVDQSDSSTSSDDKVSK) is disordered.

Belongs to the RNA polymerase beta chain family. The RNAP catalytic core consists of 2 alpha, 1 beta, 1 beta' and 1 omega subunit. When a sigma factor is associated with the core the holoenzyme is formed, which can initiate transcription.

It carries out the reaction RNA(n) + a ribonucleoside 5'-triphosphate = RNA(n+1) + diphosphate. In terms of biological role, DNA-dependent RNA polymerase catalyzes the transcription of DNA into RNA using the four ribonucleoside triphosphates as substrates. The sequence is that of DNA-directed RNA polymerase subunit beta from Lactobacillus gasseri (strain ATCC 33323 / DSM 20243 / BCRC 14619 / CIP 102991 / JCM 1131 / KCTC 3163 / NCIMB 11718 / NCTC 13722 / AM63).